A 560-amino-acid chain; its full sequence is MTPQKSDACSDPVYTVGDYLLDRLAELGVSEIFGVPGDYNLQFLDHIVAHPTIRWVGSANELNAGYAADGYGRLRGMSAVVTTFGVGELSVTNAIAGSYAEHVPVVHIVGGPTKDAQGTRRALHHSLGDGDFEHFLRISREITCAQANLMPATAGREIDRVLSEVREQKRPGYILLSSDVARFPTEPPAAPLPRYPGGTSPRALSLFTKAAIELIADHQLTVLADLLVHRLQAVKELEALLAADVVPHATLMWGKSLLDESSPNFLGIYAGAASAERVRAAIEGAPVLVTAGVVFTDMVSGFFSQRIDPARTIDIGQYQSSVADQVFAPLEMSAALQALATILTGRGISSPPVVPPPAEPPPAMPARDEPLTQQMVWDRVCSALTPGNVVLADQGTSFYGMADHRLPQGVTFIGQPLWGSIGYTLPAAVGAAVAHPDRRTVLLIGDGAAQLTVQELGTFSREGLSPVIVVVNNDGYTVERAIHGETAPYNDIVSWNWTELPSALGVTNHLAFRAQTYGQLDDALTVAAARRDRMVLVEVVLPRLEIPRLLGQLVGSMAPQ.

Glu61 provides a ligand contact to thiamine diphosphate. The thiamine pyrophosphate binding stretch occupies residues Thr396–Val478. Mg(2+) contacts are provided by Asp446, Asn473, and Gly475.

The protein belongs to the TPP enzyme family. Requires a metal cation as cofactor. The cofactor is thiamine diphosphate.

Decarboxylates branched-chain and aromatic alpha-keto acids to aldehydes. The protein is Alpha-keto-acid decarboxylase (kdc) of Mycobacterium bovis (strain ATCC BAA-935 / AF2122/97).